A 67-amino-acid polypeptide reads, in one-letter code: V-type proton ATPase subunit e (67 aa).

The Lumenal segment spans residues 1–2; sequence MG. A helical membrane pass occupies residues 3–23; that stretch reads GLVVLLVGLLTALMSVVSYYV. The Cytoplasmic portion of the chain corresponds to 24 to 35; the sequence is SPKGNNTSTWQM. Residues 36-56 form a helical membrane-spanning segment; sequence SLILTFSCCYLLWAITYLAQL. The Lumenal portion of the chain corresponds to 57 to 67; that stretch reads HPLEAPSRVLE.

Belongs to the V-ATPase e1/e2 subunit family. In terms of assembly, V-ATPase is a heteromultimeric enzyme composed of a peripheral catalytic V1 complex (components A to H) attached to an integral membrane V0 proton pore complex (components: a, c, c', c'', d, e, f and VOA1).

Its subcellular location is the vacuole membrane. In terms of biological role, subunit of the V0 complex of vacuolar(H+)-ATPase (V-ATPase), a multisubunit enzyme composed of a peripheral complex (V1) that hydrolyzes ATP and a membrane integral complex (V0) that translocates protons. V-ATPase is responsible for acidifying and maintaining the pH of intracellular compartments. In Schizosaccharomyces pombe (strain 972 / ATCC 24843) (Fission yeast), this protein is V-type proton ATPase subunit e (vma9).